The following is a 368-amino-acid chain: tRNA/tmRNA (uracil-C(5))-methyltransferase (368 aa).

S-adenosyl-L-methionine contacts are provided by Gln-190, Tyr-218, Asn-223, Glu-239, and Asp-301. Cys-326 serves as the catalytic Nucleophile. Residue Glu-360 is the Proton acceptor of the active site.

This sequence belongs to the class I-like SAM-binding methyltransferase superfamily. RNA M5U methyltransferase family. TrmA subfamily.

The catalysed reaction is uridine(54) in tRNA + S-adenosyl-L-methionine = 5-methyluridine(54) in tRNA + S-adenosyl-L-homocysteine + H(+). The enzyme catalyses uridine(341) in tmRNA + S-adenosyl-L-methionine = 5-methyluridine(341) in tmRNA + S-adenosyl-L-homocysteine + H(+). Dual-specificity methyltransferase that catalyzes the formation of 5-methyluridine at position 54 (m5U54) in all tRNAs, and that of position 341 (m5U341) in tmRNA (transfer-mRNA). The polypeptide is tRNA/tmRNA (uracil-C(5))-methyltransferase (Aliivibrio fischeri (strain MJ11) (Vibrio fischeri)).